Here is a 138-residue protein sequence, read N- to C-terminus: Large ribosomal subunit protein uL16c (138 aa).

Residues 1–21 (MLSPQKTKFRKQHRGRMKGVS) form a disordered region. Residues 7–21 (TKFRKQHRGRMKGVS) are compositionally biased toward basic residues.

It belongs to the universal ribosomal protein uL16 family. Part of the 50S ribosomal subunit.

The protein resides in the plastid. The protein localises to the chloroplast. This Cycas taitungensis (Prince sago) protein is Large ribosomal subunit protein uL16c.